Here is a 274-residue protein sequence, read N- to C-terminus: Large ribosomal subunit protein uL2cz/uL2cy (274 aa).

Disordered stretches follow at residues 1–23 (MAIH…SQVK) and 223–274 (MNPV…RRSK).

Belongs to the universal ribosomal protein uL2 family. In terms of assembly, part of the 50S ribosomal subunit.

The protein resides in the plastid. It is found in the chloroplast. This chain is Large ribosomal subunit protein uL2cz/uL2cy (rpl2-A), found in Ranunculus macranthus (Large buttercup).